Reading from the N-terminus, the 444-residue chain is MSNTILQNLPLGQKVGIAFSGGLDTSAALLWMRQKGAVPYAYTANLGQPDEDDYNAIPKKAMAYGAENARLIDCRKQLAQEGIAAIQCGAFHISTGGVTYFNTTPLGRAVTGTMLVAAMKEDDVNIWGDGSTFKGNDIERFYRYGLLTNPNLKIYKPWLDDQFIDELGGRFEMSQFLIANGFDYKMSVEKAYSTDSNMLGATHEAKDLEDLSTGIKIVKPIMGVAFWDESVEIKPEVVTVRFEEGVPVELNGKRFDDVVELFMEANRIGGRHGLGMSDQIENRIIEAKSRGIYEAPGMALFHIAYERLVTGIHNEDTIEQYRINGLRLGRLLYQGRWFDPQALMLRESSQRWVAKAITGEVKLELRRGNDYSILDTVSPNLTYEAERLSMEKVEDAPFDPIDRIGQLTMRNLDVTDTRNKLGIYSEAGLLTAGKDAVVPQLGSK.

ATP-binding positions include 18-26 and alanine 44; that span reads AFSGGLDTS. Tyrosine 100 contributes to the L-citrulline binding site. Glycine 130 and threonine 132 together coordinate ATP. Residues threonine 132, asparagine 136, and aspartate 137 each coordinate L-aspartate. Position 136 (asparagine 136) interacts with L-citrulline. Aspartate 137 contacts ATP. L-citrulline-binding residues include arginine 140 and serine 193. Aspartate 195 is a binding site for ATP. L-citrulline-binding residues include threonine 202, glutamate 204, and glutamate 281.

Belongs to the argininosuccinate synthase family. Type 2 subfamily. In terms of assembly, homotetramer.

The protein localises to the cytoplasm. It carries out the reaction L-citrulline + L-aspartate + ATP = 2-(N(omega)-L-arginino)succinate + AMP + diphosphate + H(+). It participates in amino-acid biosynthesis; L-arginine biosynthesis; L-arginine from L-ornithine and carbamoyl phosphate: step 2/3. The chain is Argininosuccinate synthase from Mannheimia succiniciproducens (strain KCTC 0769BP / MBEL55E).